The chain runs to 571 residues: Phosphomethylpyrimidine synthase (571 aa).

Substrate-binding positions include N201, M230, Y259, H295, 315–317, 356–359, and E395; these read SRG and DALR. H399 contacts Zn(2+). Y422 is a substrate binding site. Residue H463 coordinates Zn(2+). [4Fe-4S] cluster contacts are provided by C545, C548, and C553.

This sequence belongs to the ThiC family. The cofactor is [4Fe-4S] cluster.

It catalyses the reaction 5-amino-1-(5-phospho-beta-D-ribosyl)imidazole + S-adenosyl-L-methionine = 4-amino-2-methyl-5-(phosphooxymethyl)pyrimidine + CO + 5'-deoxyadenosine + formate + L-methionine + 3 H(+). Its pathway is cofactor biosynthesis; thiamine diphosphate biosynthesis. Functionally, catalyzes the synthesis of the hydroxymethylpyrimidine phosphate (HMP-P) moiety of thiamine from aminoimidazole ribotide (AIR) in a radical S-adenosyl-L-methionine (SAM)-dependent reaction. This is Phosphomethylpyrimidine synthase from Chlorobium phaeovibrioides (strain DSM 265 / 1930) (Prosthecochloris vibrioformis (strain DSM 265)).